A 253-amino-acid polypeptide reads, in one-letter code: Small ribosomal subunit protein cS22 (253 aa).

Residues 1–56 (MATFLTNVVSIKPTIFSFQSESFTPLHTRVNVFSSKPFPSLAGTFSRSSRTRFIPY) constitute a chloroplast transit peptide. RRM domains are found at residues 76–154 (RRVY…ITEK) and 177–253 (YKVY…VNKA).

This sequence belongs to the chloroplast-specific ribosomal protein cS22 family. As to quaternary structure, component of the chloroplast small ribosomal subunit (SSU). Mature 70S chloroplast ribosomes of higher plants consist of a small (30S) and a large (50S) subunit. The 30S small subunit contains 1 molecule of ribosomal RNA (16S rRNA) and 24 different proteins. The 50S large subunit contains 3 rRNA molecules (23S, 5S and 4.5S rRNA) and 33 different proteins. As to expression, expressed constitutively in roots, stems, flower buds, flowers and leaves.

The protein localises to the plastid. It localises to the chloroplast. Component of the chloroplast ribosome (chloro-ribosome), a dedicated translation machinery responsible for the synthesis of chloroplast genome-encoded proteins, including proteins of the transcription and translation machinery and components of the photosynthetic apparatus. May have a role in the recruitment of stored chloroplast mRNAs for active protein synthesis. Bind single strand DNA (ssDNA) and RNA in vitro. Exhibits RNA chaperone activity. Negatively regulates resistance responses to abiotic stresses during seed germination (e.g. salt, dehydration, and low temperature) and seedling growth (e.g. salt). The protein is Small ribosomal subunit protein cS22 of Arabidopsis thaliana (Mouse-ear cress).